The following is a 363-amino-acid chain: Trichocyst matrix protein T4-B (363 aa).

A signal peptide spans 1-17 (MARSLTILAIVFAVATA). A propeptide spanning residues 18–52 (RVTKSESPKEILAQVNKDSFGNSILSVLQLQLATG) is cleaved from the precursor. Positions 85-119 (VAFEKIIADLEQEIAYHQTQIVALSNLRDSTTEAL) form a coiled coil. The propeptide occupies 190–221 (RFEKVQAKLMESKHALFKPLINALTQLASKVD). The stretch at 244 to 352 (ASLLATEERQ…EVLTQKLSAA (109 aa)) forms a coiled coil.

Belongs to the TMP family. In terms of processing, two components are produced by post-translational processing from the precursor peptide.

Its subcellular location is the trichocyst. Structural protein that crystallize inside the trichocyst matrix. In Paramecium tetraurelia, this protein is Trichocyst matrix protein T4-B (T4B).